Reading from the N-terminus, the 242-residue chain is Immunity protein TsiV2 (242 aa).

3 helical membrane-spanning segments follow: residues 39–59, 66–86, and 118–138; these read VFGA…FADI, FWGF…LFMP, and FAWV…PLAF.

It is found in the host membrane. Immunity protein that plays a role in preventing early activation of toxin VasX. This Vibrio cholerae serotype O1 (strain ATCC 39315 / El Tor Inaba N16961) protein is Immunity protein TsiV2.